The primary structure comprises 569 residues: F-box/WD repeat-containing protein 5 (569 aa).

One can recognise an F-box domain in the interval 3 to 49; that stretch reads EGGMPLLPDSLVYQIFLSLGPADVLAAGLVCRQWQAVSRDEFLWREQ. The WD 1 repeat unit spans residues 90–129; it reads EHTDQVLHLSFSHSGYQFASCSKDCTVKIWNNDLTISLLH. Ser-151 is subject to Phosphoserine; by PLK4. Positions 308 to 316 match the D-box motif; the sequence is RRVFDSVLD. WD repeat units follow at residues 470 to 509 and 511 to 551; these read TPNDECFFIFLDVSRDFVASGAEDRHGYIWDRHYNICLAK and RHED…RVLQ.

Belongs to the FBXW5 family. As to quaternary structure, part of the SCF (SKP1-CUL1-F-box) E3 ubiquitin-protein ligase complex SCF(FBXW5) composed of CUL1, SKP1, RBX1 and FBXW5. Component of the DCX(FBXW5) E3 ubiquitin ligase complex, at least composed of (CUL4A or CUL4B), DDB1, FBXW5 and RBX1. Interacts with CDC20, EPS8, TSC1, TSC2 and SASS6. Interacts with TNFAIP8L1; TNFAIP8L1 competes with TSC2 to bind FBXW5 increasing TSC2 stability by preventing its ubiquitination. In terms of processing, phosphorylated at Ser-151 by PLK4 during the G1/S transition, leading to inhibit its ability to ubiquitinate SASS6. Ubiquitinated and degraded by the APC/C complex during mitosis and G1 phase.

The protein localises to the cytoplasm. The protein operates within protein modification; protein ubiquitination. Its function is as follows. Substrate recognition component of both SCF (SKP1-CUL1-F-box protein) and DCX (DDB1-CUL4-X-box) E3 ubiquitin-protein ligase complexes. Substrate recognition component of the SCF(FBXW5) E3 ubiquitin-protein ligase complex which mediates the ubiquitination and subsequent proteasomal degradation of SASS6 during S phase, leading to prevent centriole reduplication. The SCF(FBXW5) complex also mediates ubiquitination and degradation of actin-regulator EPS8 during G2 phase, leading to the transient degradation of EPS8 and subsequent cell shape changes required to allow mitotic progression. Substrate-specific adapter of the DCX(FBXW5) E3 ubiquitin-protein ligase complex which mediates the polyubiquitination and subsequent degradation of TSC2. May also act as a negative regulator of MAP3K7/TAK1 signaling in the interleukin-1B (IL1B) signaling pathway. The chain is F-box/WD repeat-containing protein 5 (Fbxw5) from Rattus norvegicus (Rat).